Consider the following 233-residue polypeptide: DNA repair protein RecO (233 aa).

Belongs to the RecO family.

Involved in DNA repair and RecF pathway recombination. The protein is DNA repair protein RecO of Pseudomonas paraeruginosa (strain DSM 24068 / PA7) (Pseudomonas aeruginosa (strain PA7)).